A 555-amino-acid chain; its full sequence is Glutamine--tRNA ligase (555 aa).

The short motif at 34–44 (PEPNGFLHIGH) is the 'HIGH' region element. ATP is bound by residues 35-37 (EPN) and 41-47 (HIGHAKS). Residues Asp67 and Tyr212 each contribute to the L-glutamine site. ATP is bound by residues Thr231, 261-262 (RL), and 269-271 (LSK). Residues 268 to 272 (VLSKR) carry the 'KMSKS' region motif.

It belongs to the class-I aminoacyl-tRNA synthetase family. In terms of assembly, monomer.

The protein resides in the cytoplasm. The enzyme catalyses tRNA(Gln) + L-glutamine + ATP = L-glutaminyl-tRNA(Gln) + AMP + diphosphate. The protein is Glutamine--tRNA ligase of Alteromonas mediterranea (strain DSM 17117 / CIP 110805 / LMG 28347 / Deep ecotype).